The following is a 67-amino-acid chain: Protein C' (67 aa).

Belongs to the rhabdoviruses C protein family.

Its function is as follows. Seems to stimulates transcription by the viral polymerase. May play a role in viral pathogenesis or transmission by insects vectors. The chain is Protein C' (P) from Vesicular stomatitis Indiana virus (strain 94GUB Central America) (VSIV).